The sequence spans 1794 residues: Non-reducing polyketide synthase nscA (1794 aa).

Positions 19–256 are N-terminal acylcarrier protein transacylase domain (SAT); sequence DLKDLFRRLH…PLPVYDGLCH (238 aa). The 434-residue stretch at 389–822 folds into the Ketosynthase family 3 (KS3) domain; that stretch reads ASKLAIVGMA…GGNTTVLLED (434 aa). The interval 427-448 is disordered; it reads PDRFDLNTHYDPTGKTENATQT. The span at 428 to 440 shows a compositional bias: basic and acidic residues; it reads DRFDLNTHYDPTG. Active-site for beta-ketoacyl synthase activity residues include cysteine 562, histidine 697, and histidine 740. Positions 928-1249 are malonyl-CoA:ACP transacylase (MAT) domain; that stretch reads FTGQGAYYSG…LVTLHLAGLT (322 aa). The product template (PT) domain stretch occupies residues 1314 to 1633; sequence TSLVHQITAE…RLLMDRFFSP (320 aa). The N-terminal hotdog fold stretch occupies residues 1318–1454; the sequence is HQITAETVEA…GVVRFEDPAA (137 aa). The PKS/mFAS DH domain maps to 1318 to 1628; it reads HQITAETVEA…FRRVPRLLMD (311 aa). Histidine 1350 (proton acceptor; for dehydratase activity) is an active-site residue. The C-terminal hotdog fold stretch occupies residues 1482–1628; the sequence is ASKLSKPLAY…FRRVPRLLMD (147 aa). Catalysis depends on aspartate 1539, which acts as the Proton donor; for dehydratase activity. 2 disordered regions span residues 1637–1665 and 1682–1718; these read SHAE…EAPA and ASKS…GDPV. 2 stretches are compositionally biased toward polar residues: residues 1644-1655 and 1685-1701; these read QETAPSATSVKK and SEVS…QESP. In terms of domain architecture, Carrier spans 1717–1794; the sequence is PVDAGVVGQC…EMTAWLEEYC (78 aa). Serine 1754 carries the post-translational modification O-(pantetheine 4'-phosphoryl)serine.

Pantetheine 4'-phosphate is required as a cofactor.

It functions in the pathway secondary metabolite biosynthesis. In terms of biological role, non-reducing polyketide synthase; part of the gene cluster that mediates the biosynthesis of neosartoricin, a prenylated anthracenone that exhibits T-cell antiproliferative activity, suggestive of a physiological role as an immunosuppressive agent. The non-reducing polyketide synthase nscA probably synthesizes and cyclizes the decaketide backbone. The hydrolase nscB then mediates the product release through hydrolysis followed by spontaneous decarboxylation. The prenyltransferase nscD catalyzes the addition of the dimethylallyl group to the aromatic C5. The FAD-dependent monooxygenase nscC is then responsible for the stereospecific hydroxylation at C2. There is no gene encoding O-acetyltransferase in the nsc gene cluster; thus, the last step of 2-O-acetylation leading to neosartoricin may be catalyzed by an unidentified O-acetyltransferase. The polypeptide is Non-reducing polyketide synthase nscA (Neosartorya fischeri (strain ATCC 1020 / DSM 3700 / CBS 544.65 / FGSC A1164 / JCM 1740 / NRRL 181 / WB 181) (Aspergillus fischerianus)).